Reading from the N-terminus, the 280-residue chain is Small ribosomal subunit protein uS3 (280 aa).

A KH type-2 domain is found at I38–R106. The disordered stretch occupies residues A215–S280. Low complexity predominate over residues S238 to S280.

It belongs to the universal ribosomal protein uS3 family. As to quaternary structure, part of the 30S ribosomal subunit. Forms a tight complex with proteins S10 and S14.

Binds the lower part of the 30S subunit head. Binds mRNA in the 70S ribosome, positioning it for translation. This is Small ribosomal subunit protein uS3 from Mycolicibacterium paratuberculosis (strain ATCC BAA-968 / K-10) (Mycobacterium paratuberculosis).